An 83-amino-acid chain; its full sequence is UPF0297 protein CKR_1221 (83 aa).

It belongs to the UPF0297 family.

This Clostridium kluyveri (strain NBRC 12016) protein is UPF0297 protein CKR_1221.